Consider the following 374-residue polypeptide: tRNA N6-adenosine threonylcarbamoyltransferase (374 aa).

Fe cation is bound by residues His117 and His121. Residues 140–144 (LVSGG), Asp174, Gly187, Asp191, and Asn283 contribute to the substrate site. Asp311 contacts Fe cation. Low complexity predominate over residues 337–352 (ADSSLPVTEPHVPGQG). A disordered region spans residues 337-374 (ADSSLPVTEPHVPGQGHPHGHPHGHDHVHEVSKENLYS). Residues 359-374 (HGHDHVHEVSKENLYS) show a composition bias toward basic and acidic residues.

Belongs to the KAE1 / TsaD family. Fe(2+) serves as cofactor.

It localises to the cytoplasm. The enzyme catalyses L-threonylcarbamoyladenylate + adenosine(37) in tRNA = N(6)-L-threonylcarbamoyladenosine(37) in tRNA + AMP + H(+). In terms of biological role, required for the formation of a threonylcarbamoyl group on adenosine at position 37 (t(6)A37) in tRNAs that read codons beginning with adenine. Is involved in the transfer of the threonylcarbamoyl moiety of threonylcarbamoyl-AMP (TC-AMP) to the N6 group of A37, together with TsaE and TsaB. TsaD likely plays a direct catalytic role in this reaction. The protein is tRNA N6-adenosine threonylcarbamoyltransferase of Streptomyces coelicolor (strain ATCC BAA-471 / A3(2) / M145).